Consider the following 347-residue polypeptide: MIKAYFGAETFTLNKDFAYILVIGTTDVSLIPGLTIAGATPELTHFTPAADAEYVILGKCKSINTIPVSPTGIPTPALLTRASLSFTKSLKIVVNAGSRITPKIPYIDLQGEPGKDIRKQALSIEKVNIIIENGIKLGEELSNEYELIMIGESIPAGTTTAMATLLALGYDAMDKVSSASPDNPKELKRKVVEEALRNLPTDPLQRLAKVSDPVLLGVAGISLGFRGKILLAGGTQMTAAAAIVNEFDKSKLKDIIIGTTKWIVEDKSADMLSLAKQVGVKVLASMLDLSISIHEGIRTYEKGYVKEGVGAGGSTIMAFIRGVSNSTLVRKIDELYSELVGSNNLNT.

It belongs to the UPF0284 family.

This is UPF0284 protein SSO2213 from Saccharolobus solfataricus (strain ATCC 35092 / DSM 1617 / JCM 11322 / P2) (Sulfolobus solfataricus).